We begin with the raw amino-acid sequence, 140 residues long: Transcription antitermination protein NusB (140 aa).

The protein belongs to the NusB family.

Functionally, involved in transcription antitermination. Required for transcription of ribosomal RNA (rRNA) genes. Binds specifically to the boxA antiterminator sequence of the ribosomal RNA (rrn) operons. The protein is Transcription antitermination protein NusB of Alteromonas mediterranea (strain DSM 17117 / CIP 110805 / LMG 28347 / Deep ecotype).